A 216-amino-acid chain; its full sequence is ATP phosphoribosyltransferase (216 aa).

The protein belongs to the ATP phosphoribosyltransferase family. Short subfamily. As to quaternary structure, heteromultimer composed of HisG and HisZ subunits.

It is found in the cytoplasm. The catalysed reaction is 1-(5-phospho-beta-D-ribosyl)-ATP + diphosphate = 5-phospho-alpha-D-ribose 1-diphosphate + ATP. It functions in the pathway amino-acid biosynthesis; L-histidine biosynthesis; L-histidine from 5-phospho-alpha-D-ribose 1-diphosphate: step 1/9. Catalyzes the condensation of ATP and 5-phosphoribose 1-diphosphate to form N'-(5'-phosphoribosyl)-ATP (PR-ATP). Has a crucial role in the pathway because the rate of histidine biosynthesis seems to be controlled primarily by regulation of HisG enzymatic activity. The sequence is that of ATP phosphoribosyltransferase from Thiobacillus denitrificans (strain ATCC 25259 / T1).